Consider the following 105-residue polypeptide: Large ribosomal subunit protein bL21 (105 aa).

Belongs to the bacterial ribosomal protein bL21 family. Part of the 50S ribosomal subunit. Contacts protein L20.

This protein binds to 23S rRNA in the presence of protein L20. This chain is Large ribosomal subunit protein bL21, found in Rickettsia peacockii (strain Rustic).